Reading from the N-terminus, the 361-residue chain is Chorismate synthase (361 aa).

NADP(+) contacts are provided by Arg-48 and Arg-54. Residues Arg-125 to Ser-127, Asn-238 to Ala-239, Gly-278, Lys-293 to Ser-297, and Arg-319 each bind FMN.

This sequence belongs to the chorismate synthase family. As to quaternary structure, homotetramer. FMNH2 is required as a cofactor.

It catalyses the reaction 5-O-(1-carboxyvinyl)-3-phosphoshikimate = chorismate + phosphate. Its pathway is metabolic intermediate biosynthesis; chorismate biosynthesis; chorismate from D-erythrose 4-phosphate and phosphoenolpyruvate: step 7/7. Catalyzes the anti-1,4-elimination of the C-3 phosphate and the C-6 proR hydrogen from 5-enolpyruvylshikimate-3-phosphate (EPSP) to yield chorismate, which is the branch point compound that serves as the starting substrate for the three terminal pathways of aromatic amino acid biosynthesis. This reaction introduces a second double bond into the aromatic ring system. The chain is Chorismate synthase from Yersinia enterocolitica serotype O:8 / biotype 1B (strain NCTC 13174 / 8081).